The following is a 130-amino-acid chain: Small ribosomal subunit protein uS9 (130 aa).

Residues 98-130 (LKRAGLLTRDPRMKERKKPGLKKARRSPQFSKR) form a disordered region. Residues 111–130 (KERKKPGLKKARRSPQFSKR) show a composition bias toward basic residues.

It belongs to the universal ribosomal protein uS9 family.

In Staphylococcus carnosus (strain TM300), this protein is Small ribosomal subunit protein uS9 (rpsI).